A 198-amino-acid chain; its full sequence is 3-isopropylmalate dehydratase small subunit (198 aa).

Belongs to the LeuD family. LeuD type 1 subfamily. As to quaternary structure, heterodimer of LeuC and LeuD.

It carries out the reaction (2R,3S)-3-isopropylmalate = (2S)-2-isopropylmalate. Its pathway is amino-acid biosynthesis; L-leucine biosynthesis; L-leucine from 3-methyl-2-oxobutanoate: step 2/4. Functionally, catalyzes the isomerization between 2-isopropylmalate and 3-isopropylmalate, via the formation of 2-isopropylmaleate. The polypeptide is 3-isopropylmalate dehydratase small subunit (Colwellia psychrerythraea (strain 34H / ATCC BAA-681) (Vibrio psychroerythus)).